We begin with the raw amino-acid sequence, 48 residues long: Large ribosomal subunit protein bL32 (48 aa).

Positions 1–20 (MAVPKRRVSKTRAAKRRTHY) are enriched in basic residues. Positions 1–48 (MAVPKRRVSKTRAAKRRTHYKVSLPMPVKDKDGSYKMPHRANPTTKEY) are disordered.

It belongs to the bacterial ribosomal protein bL32 family.

This Campylobacter jejuni subsp. doylei (strain ATCC BAA-1458 / RM4099 / 269.97) protein is Large ribosomal subunit protein bL32.